The primary structure comprises 607 residues: Elongation factor 4 (607 aa).

The 183-residue stretch at 11-193 (EKIRNFSIIA…QIVEKVPAPT (183 aa)) folds into the tr-type G domain. Residues 23-28 (DHGKST) and 140-143 (NKID) contribute to the GTP site.

The protein belongs to the TRAFAC class translation factor GTPase superfamily. Classic translation factor GTPase family. LepA subfamily.

It is found in the cell membrane. The catalysed reaction is GTP + H2O = GDP + phosphate + H(+). Required for accurate and efficient protein synthesis under certain stress conditions. May act as a fidelity factor of the translation reaction, by catalyzing a one-codon backward translocation of tRNAs on improperly translocated ribosomes. Back-translocation proceeds from a post-translocation (POST) complex to a pre-translocation (PRE) complex, thus giving elongation factor G a second chance to translocate the tRNAs correctly. Binds to ribosomes in a GTP-dependent manner. The polypeptide is Elongation factor 4 (Streptococcus pneumoniae serotype 19F (strain G54)).